The chain runs to 308 residues: Testis-expressed protein 52 (308 aa).

Expressed in Testis.

The protein is Testis-expressed protein 52 of Mus musculus (Mouse).